We begin with the raw amino-acid sequence, 829 residues long: uncharacterized protein (829 aa).

The protein belongs to the IIV-6 050L family.

This is an uncharacterized protein from Invertebrate iridescent virus 3 (IIV-3).